The primary structure comprises 263 residues: MKEMYENAEDKVNNSTGKWSCVEERICHLQHENPCIEQQLDDVHQKEDHKEIVTNIQRGFIESGKKDLMLEEKNKKLMNECDHLKESLFQYEREKAERVVVVRQLQQEAADSLKKLTMLESPLEGISHYHINLDETQVPKKKLFQVESQFDDLMVEKEAVSSKCVNLAKENQVFQQKLLSMKKVQQECEKLEEDKKMLEEEILNLKTHMENSMVELSKLQEYKSELDERAMQAVEKLEEIHLQEQAQYKKQLEQLNKDIIQLH.

2 coiled-coil regions span residues 65–121 (KKDL…MLES) and 171–263 (NQVF…IQLH).

This is Putative ankyrin repeat domain-containing protein 20A12 pseudogene from Homo sapiens (Human).